Here is a 233-residue protein sequence, read N- to C-terminus: Uridylate kinase (233 aa).

9-10 (GS) serves as a coordination point for ATP. Gly-43 contacts UMP. ATP-binding residues include Gly-44 and Arg-48. Residues Asp-65 and 113-119 (VTPGQTT) contribute to the UMP site. 3 residues coordinate ATP: Thr-139, Tyr-145, and Asp-148.

The protein belongs to the UMP kinase family. In terms of assembly, homohexamer.

The protein localises to the cytoplasm. The enzyme catalyses UMP + ATP = UDP + ADP. Its pathway is pyrimidine metabolism; CTP biosynthesis via de novo pathway; UDP from UMP (UMPK route): step 1/1. With respect to regulation, inhibited by UTP. In terms of biological role, catalyzes the reversible phosphorylation of UMP to UDP. The sequence is that of Uridylate kinase from Methanosarcina acetivorans (strain ATCC 35395 / DSM 2834 / JCM 12185 / C2A).